A 486-amino-acid polypeptide reads, in one-letter code: Small ribosomal subunit protein uS17B (486 aa).

The tract at residues 1–112 (MRDIGINGIK…IENKSNINFV (112 aa)) is 30S ribosomal protein S17. Residues 113–486 (DNLLNVDDKW…ELWTRKNYKS (374 aa)) are unknown.

Belongs to the universal ribosomal protein uS17 family. Part of the 30S ribosomal subunit.

In terms of biological role, one of the primary rRNA binding proteins, it binds specifically to the 5'-end of 16S ribosomal RNA. The chain is Small ribosomal subunit protein uS17B from Methanosarcina acetivorans (strain ATCC 35395 / DSM 2834 / JCM 12185 / C2A).